Consider the following 122-residue polypeptide: Large ribosomal subunit protein uL14 (122 aa).

The protein belongs to the universal ribosomal protein uL14 family. In terms of assembly, part of the 50S ribosomal subunit. Forms a cluster with proteins L3 and L19. In the 70S ribosome, L14 and L19 interact and together make contacts with the 16S rRNA in bridges B5 and B8.

Functionally, binds to 23S rRNA. Forms part of two intersubunit bridges in the 70S ribosome. The chain is Large ribosomal subunit protein uL14 from Malacoplasma penetrans (strain HF-2) (Mycoplasma penetrans).